Here is a 514-residue protein sequence, read N- to C-terminus: L-threonine dehydratase biosynthetic IlvA (514 aa).

Lysine 62 carries the post-translational modification N6-(pyridoxal phosphate)lysine. Residues asparagine 89, 188-192, and serine 315 each bind pyridoxal 5'-phosphate; that span reads GGGGL. ACT-like domains lie at 339-411 and 434-504; these read ALLA…DLSD and RLYS…DETN.

Belongs to the serine/threonine dehydratase family. As to quaternary structure, homotetramer. The cofactor is pyridoxal 5'-phosphate.

The enzyme catalyses L-threonine = 2-oxobutanoate + NH4(+). Its pathway is amino-acid biosynthesis; L-isoleucine biosynthesis; 2-oxobutanoate from L-threonine: step 1/1. Isoleucine allosterically inhibits whereas valine allosterically activates this enzyme. Functionally, catalyzes the anaerobic formation of alpha-ketobutyrate and ammonia from threonine in a two-step reaction. The first step involved a dehydration of threonine and a production of enamine intermediates (aminocrotonate), which tautomerizes to its imine form (iminobutyrate). Both intermediates are unstable and short-lived. The second step is the nonenzymatic hydrolysis of the enamine/imine intermediates to form 2-ketobutyrate and free ammonia. In the low water environment of the cell, the second step is accelerated by RidA. This Escherichia coli (strain K12) protein is L-threonine dehydratase biosynthetic IlvA (ilvA).